Consider the following 485-residue polypeptide: ATP synthase subunit beta (485 aa).

Residues 1-11 (MPATETADKNT) show a composition bias toward basic and acidic residues. The segment at 1 to 20 (MPATETADKNTKSANSDTSG) is disordered. 170–177 (GGAGVGKT) contacts ATP.

This sequence belongs to the ATPase alpha/beta chains family. As to quaternary structure, F-type ATPases have 2 components, CF(1) - the catalytic core - and CF(0) - the membrane proton channel. CF(1) has five subunits: alpha(3), beta(3), gamma(1), delta(1), epsilon(1). CF(0) has three main subunits: a(1), b(2) and c(9-12). The alpha and beta chains form an alternating ring which encloses part of the gamma chain. CF(1) is attached to CF(0) by a central stalk formed by the gamma and epsilon chains, while a peripheral stalk is formed by the delta and b chains.

It localises to the cell membrane. It carries out the reaction ATP + H2O + 4 H(+)(in) = ADP + phosphate + 5 H(+)(out). Its function is as follows. Produces ATP from ADP in the presence of a proton gradient across the membrane. The catalytic sites are hosted primarily by the beta subunits. The polypeptide is ATP synthase subunit beta (Mycolicibacterium paratuberculosis (strain ATCC BAA-968 / K-10) (Mycobacterium paratuberculosis)).